A 228-amino-acid polypeptide reads, in one-letter code: Probable septum site-determining protein MinC (228 aa).

Belongs to the MinC family. In terms of assembly, interacts with MinD and FtsZ.

Cell division inhibitor that blocks the formation of polar Z ring septums. Rapidly oscillates between the poles of the cell to destabilize FtsZ filaments that have formed before they mature into polar Z rings. Prevents FtsZ polymerization. This is Probable septum site-determining protein MinC from Oceanobacillus iheyensis (strain DSM 14371 / CIP 107618 / JCM 11309 / KCTC 3954 / HTE831).